Reading from the N-terminus, the 154-residue chain is Ribonuclease H (154 aa).

The RNase H type-1 domain occupies 1–142 (MLKQITLYTD…CDELARNAAL (142 aa)). Mg(2+) is bound by residues Asp10, Glu48, Asp70, and Asp134.

It belongs to the RNase H family. In terms of assembly, monomer. It depends on Mg(2+) as a cofactor.

Its subcellular location is the cytoplasm. It carries out the reaction Endonucleolytic cleavage to 5'-phosphomonoester.. In terms of biological role, endonuclease that specifically degrades the RNA of RNA-DNA hybrids. The protein is Ribonuclease H of Tolumonas auensis (strain DSM 9187 / NBRC 110442 / TA 4).